A 291-amino-acid polypeptide reads, in one-letter code: ATP synthase gamma chain (291 aa).

It belongs to the ATPase gamma chain family. F-type ATPases have 2 components, CF(1) - the catalytic core - and CF(0) - the membrane proton channel. CF(1) has five subunits: alpha(3), beta(3), gamma(1), delta(1), epsilon(1). CF(0) has three main subunits: a, b and c.

The protein localises to the cell inner membrane. Its function is as follows. Produces ATP from ADP in the presence of a proton gradient across the membrane. The gamma chain is believed to be important in regulating ATPase activity and the flow of protons through the CF(0) complex. This Chlorobium phaeobacteroides (strain DSM 266 / SMG 266 / 2430) protein is ATP synthase gamma chain.